The sequence spans 132 residues: Ribosome-binding factor A (132 aa).

The protein belongs to the RbfA family. As to quaternary structure, monomer. Binds 30S ribosomal subunits, but not 50S ribosomal subunits or 70S ribosomes.

It localises to the cytoplasm. Functionally, one of several proteins that assist in the late maturation steps of the functional core of the 30S ribosomal subunit. Associates with free 30S ribosomal subunits (but not with 30S subunits that are part of 70S ribosomes or polysomes). Required for efficient processing of 16S rRNA. May interact with the 5'-terminal helix region of 16S rRNA. The chain is Ribosome-binding factor A from Pectobacterium atrosepticum (strain SCRI 1043 / ATCC BAA-672) (Erwinia carotovora subsp. atroseptica).